Here is a 729-residue protein sequence, read N- to C-terminus: MLYKGDTLYVDWLEDGIAELVFDAPGSVNKLDTATVASLGHALDVLEKQSDLKGLLLRSEKAAFIVGADITEFLSLFQVPEEQLSQWLHFANSVFNRLEDLPVPTISAVNGYALGGGCECVLATDYRLATPDLRIGLPETKLGIMPGFGGSVRMPRMLGADSALEIIAAGKDVGADQALKIGLIDGIVKAEKLRDGAISILRQAINGDLDWKAKRQRKLEPLKLSKIEATMSFTIAKGMVMQTAGKHYPAPITAVKTIEAAARLGREEALKLENQSFVPLAHTNEARALVGIFLNDQFVKGKAKQLTKNVEMPKQAAVLGAGIMGGGIAYQSAWKGVPVIMKDINDKSLTLGMTEAAKLLNKQLERGKIDGLKLSGVISTIHPTLEYSGFDRVDVVVEAVVENPKIKKAVLAETEDKVRPDTVLASNTSTIPIGELASVLKRPENFCGMHFFNPVHRMPLVEVIRGEKTSDETIAKVVAWASKMGKTPIVVNDCPGFFVNRVLFPYFAGFSQLLRDGADFRKVDKVMEKQFGWPMGPAYLLDVVGIDTAHHAQAVMAAGFPQRMQKDYRDAIDALFDANRFGQKNGLGFWRYKEDSKGKPKKEDDTAVESLLADVSQPTRDFSDEEIIARMMIPMVNEVVRCLEEGIIASPAEADMALVYGLGFPPFHGGAFRWLDTLGSAKYLDMAQQYQQLGPLYEVPDGLRNKARHNEPYYPPVEPARPVGALKTA.

Positions 1-189 (MLYKGDTLYV…KIGLIDGIVK (189 aa)) are enoyl-CoA hydratase/isomerase. Asp296 is a binding site for substrate. Residues 311-729 (EMPKQAAVLG…ARPVGALKTA (419 aa)) are 3-hydroxyacyl-CoA dehydrogenase. NAD(+)-binding positions include Met324, Asp343, 400–402 (VVE), Lys407, and Ser429. The active-site For 3-hydroxyacyl-CoA dehydrogenase activity is the His450. Residue Asn453 coordinates NAD(+). Substrate contacts are provided by Asn500 and Tyr660. The interval 708 to 729 (RHNEPYYPPVEPARPVGALKTA) is disordered.

It in the N-terminal section; belongs to the enoyl-CoA hydratase/isomerase family. In the C-terminal section; belongs to the 3-hydroxyacyl-CoA dehydrogenase family. Heterotetramer of two alpha chains (FadB) and two beta chains (FadA).

It carries out the reaction a (3S)-3-hydroxyacyl-CoA + NAD(+) = a 3-oxoacyl-CoA + NADH + H(+). The catalysed reaction is a (3S)-3-hydroxyacyl-CoA = a (2E)-enoyl-CoA + H2O. The enzyme catalyses a 4-saturated-(3S)-3-hydroxyacyl-CoA = a (3E)-enoyl-CoA + H2O. It catalyses the reaction (3S)-3-hydroxybutanoyl-CoA = (3R)-3-hydroxybutanoyl-CoA. It carries out the reaction a (3Z)-enoyl-CoA = a 4-saturated (2E)-enoyl-CoA. The catalysed reaction is a (3E)-enoyl-CoA = a 4-saturated (2E)-enoyl-CoA. The protein operates within lipid metabolism; fatty acid beta-oxidation. Its function is as follows. Involved in the aerobic and anaerobic degradation of long-chain fatty acids via beta-oxidation cycle. Catalyzes the formation of 3-oxoacyl-CoA from enoyl-CoA via L-3-hydroxyacyl-CoA. It can also use D-3-hydroxyacyl-CoA and cis-3-enoyl-CoA as substrate. This chain is Fatty acid oxidation complex subunit alpha, found in Enterobacter sp. (strain 638).